We begin with the raw amino-acid sequence, 1173 residues long: Rac guanine nucleotide exchange factor JJ (1173 aa).

Disordered regions lie at residues 1-380 (MSYE…NQTQ), 458-479 (KDQL…LKQM), and 712-765 (DDQN…QQQQ). 2 stretches are compositionally biased toward low complexity: residues 8–23 (QQQQ…QQQQ) and 35–45 (QQQQHPQPQYP). Positions 50-62 (TAQSNDSQQQHYG) are enriched in polar residues. Low complexity-rich tracts occupy residues 72 to 82 (TTSTTQQQQQQ) and 98 to 118 (QYDQ…NYDY). Residues 119–133 (SNTSGNRNSGQYDQY) are compositionally biased toward polar residues. 3 stretches are compositionally biased toward low complexity: residues 134-143 (TTTNTTSANT), 153-191 (SPTP…TSTN), and 208-219 (SQTQQQHSPTSS). Positions 220 to 239 (YDYSQVTNNTATNYDSYYQQ) are enriched in polar residues. Residues 240 to 258 (PTTPTSTSSSSSTTTTTTT) are compositionally biased toward low complexity. Residues 262-277 (SKFEKSQSLKNMDHFI) are compositionally biased toward basic and acidic residues. The span at 280–295 (TPSNTPSATINSWDYN) shows a compositional bias: polar residues. Residues 296–380 (QQQPQPQQPQ…NTDTYSNQTQ (85 aa)) are compositionally biased toward low complexity. Over residues 470–479 (KKGEEDLKQM) the composition is skewed to basic and acidic residues. The segment covering 743 to 765 (QQPQPQQEQPPQQQQQQQQQQQQ) has biased composition (low complexity). The IQ domain occupies 793 to 822 (RFGDIIRVQRVSRKWLARKKFKDLVKMKLL). The region spanning 833 to 1016 (NRFKSVNELY…KDINKYINDR (184 aa)) is the DH domain. Residues 1044 to 1146 (RYFVRESQCN…WLQDLSVELK (103 aa)) form the PH domain.

In terms of biological role, GTPase-activating protein. This is Rac guanine nucleotide exchange factor JJ (gxcJJ) from Dictyostelium discoideum (Social amoeba).